The following is a 603-amino-acid chain: Elongation factor 4 (603 aa).

The tr-type G domain maps to 7–191 (DNIRNFSIVA…AIVTRLPPPK (185 aa)). Residues 19–24 (DHGKST) and 138–141 (NKVD) each bind GTP.

Belongs to the TRAFAC class translation factor GTPase superfamily. Classic translation factor GTPase family. LepA subfamily.

It is found in the cell inner membrane. The enzyme catalyses GTP + H2O = GDP + phosphate + H(+). Required for accurate and efficient protein synthesis under certain stress conditions. May act as a fidelity factor of the translation reaction, by catalyzing a one-codon backward translocation of tRNAs on improperly translocated ribosomes. Back-translocation proceeds from a post-translocation (POST) complex to a pre-translocation (PRE) complex, thus giving elongation factor G a second chance to translocate the tRNAs correctly. Binds to ribosomes in a GTP-dependent manner. The chain is Elongation factor 4 from Rhodopseudomonas palustris (strain BisA53).